The chain runs to 183 residues: Potassium-transporting ATPase KdpC subunit (183 aa).

Residues A10 to I30 form a helical membrane-spanning segment.

The protein belongs to the KdpC family. In terms of assembly, the system is composed of three essential subunits: KdpA, KdpB and KdpC.

The protein resides in the cell inner membrane. Its function is as follows. Part of the high-affinity ATP-driven potassium transport (or Kdp) system, which catalyzes the hydrolysis of ATP coupled with the electrogenic transport of potassium into the cytoplasm. This subunit acts as a catalytic chaperone that increases the ATP-binding affinity of the ATP-hydrolyzing subunit KdpB by the formation of a transient KdpB/KdpC/ATP ternary complex. The chain is Potassium-transporting ATPase KdpC subunit from Pseudomonas aeruginosa (strain ATCC 15692 / DSM 22644 / CIP 104116 / JCM 14847 / LMG 12228 / 1C / PRS 101 / PAO1).